The sequence spans 400 residues: Probable transposase for insertion sequence element ISRM3-like (400 aa).

The protein belongs to the transposase mutator family.

Functionally, required for the transposition of the insertion element. The polypeptide is Probable transposase for insertion sequence element ISRM3-like (Sinorhizobium fredii (strain NBRC 101917 / NGR234)).